A 343-amino-acid chain; its full sequence is Glycerol-3-phosphate dehydrogenase [NAD(P)+] (343 aa).

The NADPH site is built by S22, Y23, H43, and K117. Residues K117, G146, and T148 each coordinate sn-glycerol 3-phosphate. Residue A150 coordinates NADPH. Sn-glycerol 3-phosphate is bound by residues K202, D255, S265, R266, and N267. Catalysis depends on K202, which acts as the Proton acceptor. R266 contributes to the NADPH binding site. NADPH contacts are provided by V290 and E292.

This sequence belongs to the NAD-dependent glycerol-3-phosphate dehydrogenase family.

The protein localises to the cytoplasm. The catalysed reaction is sn-glycerol 3-phosphate + NAD(+) = dihydroxyacetone phosphate + NADH + H(+). It catalyses the reaction sn-glycerol 3-phosphate + NADP(+) = dihydroxyacetone phosphate + NADPH + H(+). It participates in membrane lipid metabolism; glycerophospholipid metabolism. Its function is as follows. Catalyzes the reduction of the glycolytic intermediate dihydroxyacetone phosphate (DHAP) to sn-glycerol 3-phosphate (G3P), the key precursor for phospholipid synthesis. The chain is Glycerol-3-phosphate dehydrogenase [NAD(P)+] from Aliivibrio fischeri (strain ATCC 700601 / ES114) (Vibrio fischeri).